Consider the following 377-residue polypeptide: Testis-expressed protein 13A (377 aa).

The segment at 92–377 is required for repression of transcription; it reads WLQDLSSLHK…CGKGIWLQNP (286 aa). The stretch at 122-156 forms a coiled coil; it reads QKEVALQLQMAQAKLEEVQRERDLLRLKILQAELR. The LRR repeat unit spans residues 142–165; it reads ERDLLRLKILQAELRALPNAVRPA. The RanBP2-type zinc-finger motif lies at 345 to 369; it reads RPGDWDCPWCKAVNFSRRENCFHCG. Residues Cys351, Cys354, Cys365, and Cys368 each contribute to the Zn(2+) site.

Belongs to the TEX13 family. Interacts with CNOT1; the interaction may inhibit CNOT1 binding to mRNA and subsequently CNOT1-mediated mRNA degradation.

Its function is as follows. Binds to ssRNA containing the consensus sequence 5'-AGGUAA-3'. Plays a role in transcriptional repression. Required for rapid sperm motility and timely degradation of mRNA via its interaction with CNOT1. This chain is Testis-expressed protein 13A, found in Mus musculus (Mouse).